Here is a 71-residue protein sequence, read N- to C-terminus: Beta-defensin 10 (71 aa).

Residues 1-23 (MKTLCSLLLIGCLLFSYDTPVVG) form the signal peptide. Intrachain disulfides connect Cys37–Cys66, Cys44–Cys59, and Cys49–Cys67.

The protein belongs to the beta-defensin family.

The protein localises to the secreted. In terms of biological role, has antibacterial activity. The polypeptide is Beta-defensin 10 (Defb10) (Rattus norvegicus (Rat)).